Consider the following 317-residue polypeptide: Porphobilinogen deaminase (317 aa).

Position 245 is an S-(dipyrrolylmethanemethyl)cysteine (C245).

The protein belongs to the HMBS family. As to quaternary structure, monomer. It depends on dipyrromethane as a cofactor.

It carries out the reaction 4 porphobilinogen + H2O = hydroxymethylbilane + 4 NH4(+). The protein operates within porphyrin-containing compound metabolism; protoporphyrin-IX biosynthesis; coproporphyrinogen-III from 5-aminolevulinate: step 2/4. It participates in porphyrin-containing compound metabolism; chlorophyll biosynthesis. Functionally, tetrapolymerization of the monopyrrole PBG into the hydroxymethylbilane pre-uroporphyrinogen in several discrete steps. This Synechococcus sp. (strain RCC307) protein is Porphobilinogen deaminase.